The sequence spans 708 residues: Exocyst complex component 8 (708 aa).

Residues Y168–R268 form the PH domain. Positions A271–A282 are enriched in basic and acidic residues. The disordered stretch occupies residues A271 to V314. Positions F297–V314 are enriched in acidic residues.

The protein belongs to the EXO84 family. As to quaternary structure, the exocyst complex is composed of EXOC1, EXOC2, EXOC3, EXOC4, EXOC5, EXOC6, EXOC7 and EXOC8.

The protein resides in the cytoplasm. It is found in the perinuclear region. The protein localises to the cell projection. It localises to the growth cone. Component of the exocyst complex involved in the docking of exocytic vesicles with fusion sites on the plasma membrane. This is Exocyst complex component 8 (EXOC8) from Gallus gallus (Chicken).